Consider the following 122-residue polypeptide: Large ribosomal subunit protein uL14 (122 aa).

This sequence belongs to the universal ribosomal protein uL14 family. As to quaternary structure, part of the 50S ribosomal subunit. Forms a cluster with proteins L3 and L19. In the 70S ribosome, L14 and L19 interact and together make contacts with the 16S rRNA in bridges B5 and B8.

Binds to 23S rRNA. Forms part of two intersubunit bridges in the 70S ribosome. This is Large ribosomal subunit protein uL14 from Neisseria meningitidis serogroup C (strain 053442).